Reading from the N-terminus, the 130-residue chain is S-protein homolog 30 (130 aa).

Asparagine 64 and asparagine 77 each carry an N-linked (GlcNAc...) asparagine glycan.

The protein belongs to the plant self-incompatibility (S1) protein family.

The protein resides in the secreted. In Arabidopsis thaliana (Mouse-ear cress), this protein is S-protein homolog 30.